The sequence spans 169 residues: Peptide deformylase (169 aa).

Positions 91 and 133 each coordinate Fe cation. Residue E134 is part of the active site. H137 is a binding site for Fe cation.

Belongs to the polypeptide deformylase family. It depends on Fe(2+) as a cofactor.

The catalysed reaction is N-terminal N-formyl-L-methionyl-[peptide] + H2O = N-terminal L-methionyl-[peptide] + formate. Its function is as follows. Removes the formyl group from the N-terminal Met of newly synthesized proteins. Requires at least a dipeptide for an efficient rate of reaction. N-terminal L-methionine is a prerequisite for activity but the enzyme has broad specificity at other positions. The chain is Peptide deformylase from Salmonella arizonae (strain ATCC BAA-731 / CDC346-86 / RSK2980).